The chain runs to 410 residues: Aminopeptidase AmpS (410 aa).

Positions 250, 316, 340, 345, 378, and 380 each coordinate a divalent metal cation.

Belongs to the peptidase M29 family. Co(2+) serves as cofactor. Requires Zn(2+) as cofactor. It depends on Mg(2+) as a cofactor.

In terms of biological role, metal-dependent exopeptidase. This is Aminopeptidase AmpS (ampS) from Bacillus subtilis (strain 168).